Reading from the N-terminus, the 417-residue chain is 26S proteasome regulatory subunit RPN14 (417 aa).

WD repeat units lie at residues 134–173, 176–215, 242–281, 285–325, 330–371, and 380–416; these read AHVS…NPRT, GHRA…TIHT, ISTS…QTIQ, KFTC…CPVG, NEGT…PAIE, and SNDD…NLSN.

This sequence belongs to the WD repeat PAAF1/RPN14 family. In terms of assembly, associates with the 19S proteasome regulatory particle (RP). Interacts directly with RPT5 and RPT6.

It is found in the cytoplasm. Its subcellular location is the nucleus. Functionally, acts as a regulatory subunit of the 26 proteasome which is involved in the ATP-dependent degradation of ubiquitinated proteins. Is not a genuine component of the 26S proteasome, but an auxiliary factor that interacts with the proteasomal ATPase of 19S regulatory particle (RP). Acts as a chaperone which regulates the highly structured assembly of the 19S regulatory particle. Involved in the substrate specificity of the 26S proteasome and is especially involved in the degradation of ubiquitinated GCN4. May contribute to the stability of the 26S proteasome in some stress conditions. This Saccharomyces cerevisiae (strain ATCC 204508 / S288c) (Baker's yeast) protein is 26S proteasome regulatory subunit RPN14 (RPN14).